Consider the following 322-residue polypeptide: Phosphatidylserine decarboxylase proenzyme (322 aa).

Residues Asp-90, His-147, and Ser-254 each act as charge relay system; for autoendoproteolytic cleavage activity in the active site. The Schiff-base intermediate with substrate; via pyruvic acid; for decarboxylase activity role is filled by Ser-254. Ser-254 is modified (pyruvic acid (Ser); by autocatalysis). The tract at residues 294-322 (EVEPVPLPEEEIKAEHDASPLVDDKKDET) is disordered. The segment covering 303–322 (EEIKAEHDASPLVDDKKDET) has biased composition (basic and acidic residues).

It belongs to the phosphatidylserine decarboxylase family. PSD-B subfamily. Prokaryotic type I sub-subfamily. In terms of assembly, heterodimer of a large membrane-associated beta subunit and a small pyruvoyl-containing alpha subunit. Pyruvate is required as a cofactor. Post-translationally, is synthesized initially as an inactive proenzyme. Formation of the active enzyme involves a self-maturation process in which the active site pyruvoyl group is generated from an internal serine residue via an autocatalytic post-translational modification. Two non-identical subunits are generated from the proenzyme in this reaction, and the pyruvate is formed at the N-terminus of the alpha chain, which is derived from the carboxyl end of the proenzyme. The autoendoproteolytic cleavage occurs by a canonical serine protease mechanism, in which the side chain hydroxyl group of the serine supplies its oxygen atom to form the C-terminus of the beta chain, while the remainder of the serine residue undergoes an oxidative deamination to produce ammonia and the pyruvoyl prosthetic group on the alpha chain. During this reaction, the Ser that is part of the protease active site of the proenzyme becomes the pyruvoyl prosthetic group, which constitutes an essential element of the active site of the mature decarboxylase.

The protein localises to the cell membrane. It catalyses the reaction a 1,2-diacyl-sn-glycero-3-phospho-L-serine + H(+) = a 1,2-diacyl-sn-glycero-3-phosphoethanolamine + CO2. The protein operates within phospholipid metabolism; phosphatidylethanolamine biosynthesis; phosphatidylethanolamine from CDP-diacylglycerol: step 2/2. Its function is as follows. Catalyzes the formation of phosphatidylethanolamine (PtdEtn) from phosphatidylserine (PtdSer). The protein is Phosphatidylserine decarboxylase proenzyme of Salmonella arizonae (strain ATCC BAA-731 / CDC346-86 / RSK2980).